The following is a 130-amino-acid chain: Small ribosomal subunit protein uS8 (130 aa).

It belongs to the universal ribosomal protein uS8 family. Part of the 30S ribosomal subunit. Contacts proteins S5 and S12.

In terms of biological role, one of the primary rRNA binding proteins, it binds directly to 16S rRNA central domain where it helps coordinate assembly of the platform of the 30S subunit. The chain is Small ribosomal subunit protein uS8 from Acidiphilium cryptum (strain JF-5).